A 124-amino-acid polypeptide reads, in one-letter code: ATP synthase subunit H, mitochondrial (124 aa).

Residues Met-1–Tyr-32 constitute a mitochondrion transit peptide. The tract at residues Asn-89–His-124 is disordered. The segment covering Glu-100–His-124 has biased composition (acidic residues).

Belongs to the ATPase h subunit family. As to quaternary structure, F-type ATPases have 2 components, CF(1) - the catalytic core - and CF(0) - the membrane proton channel. In yeast, the dimeric form of ATP synthase consists of 17 polypeptides: alpha, beta, gamma, delta, epsilon, 4 (B), 5 (OSCP), 6 (A), 8, 9 (C), d, E (Tim11), f, g, h, i/j and k.

It is found in the mitochondrion. The protein resides in the mitochondrion inner membrane. In terms of biological role, mitochondrial membrane ATP synthase (F(1)F(0) ATP synthase or Complex V) produces ATP from ADP in the presence of a proton gradient across the membrane which is generated by electron transport complexes of the respiratory chain. F-type ATPases consist of two structural domains, F(1) - containing the extramembraneous catalytic core and F(0) - containing the membrane proton channel, linked together by a central stalk and a peripheral stalk. During catalysis, ATP synthesis in the catalytic domain of F(1) is coupled via a rotary mechanism of the central stalk subunits to proton translocation. Part of the complex F(0) domain. Minor subunit located with subunit a in the membrane. In Saccharomyces cerevisiae (strain ATCC 204508 / S288c) (Baker's yeast), this protein is ATP synthase subunit H, mitochondrial (ATP14).